A 291-amino-acid chain; its full sequence is N-acetylmannosamine kinase (291 aa).

Residues Ala-5 to Lys-12 and Gly-132 to Cys-139 contribute to the ATP site. The Zn(2+) site is built by His-156, Cys-166, Cys-168, and Cys-173.

It belongs to the ROK (NagC/XylR) family. NanK subfamily. In terms of assembly, homodimer.

The enzyme catalyses an N-acyl-D-mannosamine + ATP = an N-acyl-D-mannosamine 6-phosphate + ADP + H(+). Its pathway is amino-sugar metabolism; N-acetylneuraminate degradation; D-fructose 6-phosphate from N-acetylneuraminate: step 2/5. Catalyzes the phosphorylation of N-acetylmannosamine (ManNAc) to ManNAc-6-P. The polypeptide is N-acetylmannosamine kinase (Salmonella paratyphi B (strain ATCC BAA-1250 / SPB7)).